Here is a 408-residue protein sequence, read N- to C-terminus: Peptidase T (408 aa).

Histidine 78 provides a ligand contact to Zn(2+). The active site involves aspartate 80. Aspartate 141 is a Zn(2+) binding site. Catalysis depends on glutamate 175, which acts as the Proton acceptor. Residues glutamate 176, aspartate 198, and histidine 380 each contribute to the Zn(2+) site.

It belongs to the peptidase M20B family. Zn(2+) is required as a cofactor.

The protein localises to the cytoplasm. It carries out the reaction Release of the N-terminal residue from a tripeptide.. In terms of biological role, cleaves the N-terminal amino acid of tripeptides. This is Peptidase T from Clostridium botulinum (strain ATCC 19397 / Type A).